A 243-amino-acid chain; its full sequence is UPF0758 protein PCC7424_2073 (243 aa).

The MPN domain maps to 112–235 (VEINDPVSAV…HQSLRTVTDL (124 aa)). Zn(2+) contacts are provided by histidine 184, histidine 186, and aspartate 197. A JAMM motif motif is present at residues 184 to 197 (HNHPSGNVAPSQED).

This sequence belongs to the UPF0758 family.

The polypeptide is UPF0758 protein PCC7424_2073 (Gloeothece citriformis (strain PCC 7424) (Cyanothece sp. (strain PCC 7424))).